The sequence spans 108 residues: Phosphoribosyl-AMP cyclohydrolase (108 aa).

Aspartate 72 is a binding site for Mg(2+). Cysteine 73 is a Zn(2+) binding site. The Mg(2+) site is built by aspartate 74 and aspartate 76. Residues cysteine 89 and cysteine 96 each contribute to the Zn(2+) site.

The protein belongs to the PRA-CH family. As to quaternary structure, homodimer. It depends on Mg(2+) as a cofactor. Zn(2+) serves as cofactor.

The protein localises to the cytoplasm. It carries out the reaction 1-(5-phospho-beta-D-ribosyl)-5'-AMP + H2O = 1-(5-phospho-beta-D-ribosyl)-5-[(5-phospho-beta-D-ribosylamino)methylideneamino]imidazole-4-carboxamide. It functions in the pathway amino-acid biosynthesis; L-histidine biosynthesis; L-histidine from 5-phospho-alpha-D-ribose 1-diphosphate: step 3/9. In terms of biological role, catalyzes the hydrolysis of the adenine ring of phosphoribosyl-AMP. The protein is Phosphoribosyl-AMP cyclohydrolase of Archaeoglobus fulgidus (strain ATCC 49558 / DSM 4304 / JCM 9628 / NBRC 100126 / VC-16).